We begin with the raw amino-acid sequence, 207 residues long: D-aminoacyl-tRNA deacylase 1 (207 aa).

The Gly-cisPro motif, important for rejection of L-amino acids motif lies at 139–140 (GP). Residues 142-207 (TIQLESPPAP…EGDVSSEREP (66 aa)) form a disordered region. Basic and acidic residues-rich tracts occupy residues 156 to 167 (LLSKQEKQQQRK) and 178 to 189 (SSREKAAQRSKV).

The protein belongs to the DTD family. In terms of assembly, homodimer.

It is found in the cytoplasm. It catalyses the reaction a D-aminoacyl-tRNA + H2O = a tRNA + a D-alpha-amino acid + H(+). The catalysed reaction is glycyl-tRNA(Ala) + H2O = tRNA(Ala) + glycine + H(+). Functionally, D-aminoacyl-tRNA deacylase, with no observable activity on tRNAs charged with their cognate L-amino acid. Hydrolyzes correctly charged, achiral, glycyl-tRNA(Gly). Deacylates mischarged D.melanogaster and E.coli glycyl-tRNA(Ala), protecting cells against glycine mischarging by AlaRS. Acts via tRNA-based rather than protein-based catalysis; rejects L-amino acids rather than detecting D-amino acids in the active site. By recycling D-aminoacyl-tRNA to D-amino acids and free tRNA molecules, this enzyme counteracts the toxicity associated with the formation of D-aminoacyl-tRNA entities in vivo and helps enforce protein L-homochirality. This Danio rerio (Zebrafish) protein is D-aminoacyl-tRNA deacylase 1.